A 317-amino-acid chain; its full sequence is tRNA pseudouridine synthase B (317 aa).

Catalysis depends on D47, which acts as the Nucleophile.

The protein belongs to the pseudouridine synthase TruB family. Type 1 subfamily.

It catalyses the reaction uridine(55) in tRNA = pseudouridine(55) in tRNA. In terms of biological role, responsible for synthesis of pseudouridine from uracil-55 in the psi GC loop of transfer RNAs. The polypeptide is tRNA pseudouridine synthase B (Vibrio atlanticus (strain LGP32) (Vibrio splendidus (strain Mel32))).